The chain runs to 1507 residues: Nonribosomal peptide synthetase ataP (1507 aa).

Residues 1-72 (MQINIRNEIA…DIISRSTGMY (72 aa)) form the Carrier 1 domain. Residue S33 is modified to O-(pantetheine 4'-phosphoryl)serine. Positions 98–119 (TPSPSPSGPSTGCPTPDTLDTT) are disordered. The segment covering 105–115 (GPSTGCPTPDT) has biased composition (low complexity). The tract at residues 163–429 (TRMAWQQVLE…NRVFRQLVQL (267 aa)) is condensation 1. An adenylation region spans residues 514–893 (AAAENPEACA…GRNDRQIKLR (380 aa)). The 78-residue stretch at 988–1065 (NEMSPTEQRV…DLSQRIDKLQ (78 aa)) folds into the Carrier 2 domain. At S1025 the chain carries O-(pantetheine 4'-phosphoryl)serine. Residues 1099–1471 (TSNTSFTVSF…MTALRLLIKN (373 aa)) form a condensation 2 region.

It belongs to the NRP synthetase family.

Its pathway is mycotoxin biosynthesis. Its function is as follows. Nonribosomal peptide synthetase; part of the gene cluster that mediates the biosynthesis of acetylaranotin, a member of the epipolythiodioxopiperazine (ETP) class of toxins characterized by a disulfide-bridged cyclic dipeptide. The first step of acetylaranotin biosynthesis is performed by the NRPS ataP which produces diketopiperazine cyclo-L-Phe-L-Phe via the condensation of 2 phenylalanines (L-Phe). The ataC domain of ataTC then catalyzes the formation of bishydroxylation of cyclo-L-Phe-L-Phe. The glutathione S-transferase domain ataG in ataIMG further catalyzes the conjugation of two glutathiones to the bishydroxylated intermediate. Next, the dipeptidase ataJ removes the Glu residues. The following step is performed by the carbon sulfur lyase domain ataI of ataIMG which may convert the bis-cysteinyl adduct to yield an epidithiol intermediate. The ataT domain from ataTC then catalyzes the oxidation of the free dithiols, followed by a cyclization step catalyzed by the cytochrome P450 ataF. AtaF probably acts as an epoxidase to promote a dual epoxidation formation at C8 and C9 along with C8' and C9', followed by the spontaneous nucleophilic attack of the amide nitrogens N10 and N10' to yield an intermediate with the pyrrolidine partial structure. The final steps of acetylaranotin biosynthesis involve the acetylation and ring rearrangement of an epitetrathiodiketopiperazine intermediate to produce acetylaranotin. AtaH probably catalyzes the acetylation of epitetrathiodiketopiperazine to produce a diacetate and ataY is responsible for the formation of the dihydrooxepin moiety that converts the diacetate intermediate to acetylaranotin via acetylapoaranotin. Both enzymes could function independently in the absence of the other. The acetylaranotin bis-thiomethyltransferase ataS located outside of acetylaranotin gene cluster is the main thiomethyltransferase responsible for converting acetylaranotin and its related intermediates to their methylated forms. This is Nonribosomal peptide synthetase ataP from Aspergillus terreus (strain NIH 2624 / FGSC A1156).